A 156-amino-acid polypeptide reads, in one-letter code: Small ribosomal subunit protein uS7 (156 aa).

Belongs to the universal ribosomal protein uS7 family. In terms of assembly, part of the 30S ribosomal subunit. Contacts proteins S9 and S11.

One of the primary rRNA binding proteins, it binds directly to 16S rRNA where it nucleates assembly of the head domain of the 30S subunit. Is located at the subunit interface close to the decoding center, probably blocks exit of the E-site tRNA. The protein is Small ribosomal subunit protein uS7 of Sodalis glossinidius (strain morsitans).